We begin with the raw amino-acid sequence, 301 residues long: GTPase Era (301 aa).

The region spanning 7–175 is the Era-type G domain; the sequence is YCGFIAIVGR…AGIVRKHLPE (169 aa). Residues 15 to 22 are G1; it reads GRPNVGKS. Residue 15 to 22 participates in GTP binding; it reads GRPNVGKS. A G2 region spans residues 41-45; sequence QTTRH. The tract at residues 62-65 is G3; it reads DTPG. GTP contacts are provided by residues 62-66 and 124-127; these read DTPGL and NKVD. The interval 124–127 is G4; it reads NKVD. A G5 region spans residues 154 to 156; the sequence is LSA. The KH type-2 domain maps to 198–283; the sequence is IREKLMRFLG…HLELWVKVKS (86 aa).

This sequence belongs to the TRAFAC class TrmE-Era-EngA-EngB-Septin-like GTPase superfamily. Era GTPase family. Monomer.

The protein localises to the cytoplasm. Its subcellular location is the cell inner membrane. Its function is as follows. An essential GTPase that binds both GDP and GTP, with rapid nucleotide exchange. Plays a role in 16S rRNA processing and 30S ribosomal subunit biogenesis and possibly also in cell cycle regulation and energy metabolism. The sequence is that of GTPase Era from Enterobacter sp. (strain 638).